The following is a 348-amino-acid chain: Holliday junction branch migration complex subunit RuvB (348 aa).

Positions 4-184 (ADRLIAASGR…FGIVQRLEFY (181 aa)) are large ATPase domain (RuvB-L). Residues I23, R24, G65, K68, T69, T70, 131-133 (EDF), R174, Y184, and R221 each bind ATP. A Mg(2+)-binding site is contributed by T69. A small ATPAse domain (RuvB-S) region spans residues 185–255 (SDKDLATIVS…VADLALNLLD (71 aa)). The tract at residues 258–348 (ERGFDHSDRR…GADFSEAGDE (91 aa)) is head domain (RuvB-H). 3 residues coordinate DNA: R294, R313, and R318.

The protein belongs to the RuvB family. In terms of assembly, homohexamer. Forms an RuvA(8)-RuvB(12)-Holliday junction (HJ) complex. HJ DNA is sandwiched between 2 RuvA tetramers; dsDNA enters through RuvA and exits via RuvB. An RuvB hexamer assembles on each DNA strand where it exits the tetramer. Each RuvB hexamer is contacted by two RuvA subunits (via domain III) on 2 adjacent RuvB subunits; this complex drives branch migration. In the full resolvosome a probable DNA-RuvA(4)-RuvB(12)-RuvC(2) complex forms which resolves the HJ.

The protein resides in the cytoplasm. The catalysed reaction is ATP + H2O = ADP + phosphate + H(+). The RuvA-RuvB-RuvC complex processes Holliday junction (HJ) DNA during genetic recombination and DNA repair, while the RuvA-RuvB complex plays an important role in the rescue of blocked DNA replication forks via replication fork reversal (RFR). RuvA specifically binds to HJ cruciform DNA, conferring on it an open structure. The RuvB hexamer acts as an ATP-dependent pump, pulling dsDNA into and through the RuvAB complex. RuvB forms 2 homohexamers on either side of HJ DNA bound by 1 or 2 RuvA tetramers; 4 subunits per hexamer contact DNA at a time. Coordinated motions by a converter formed by DNA-disengaged RuvB subunits stimulates ATP hydrolysis and nucleotide exchange. Immobilization of the converter enables RuvB to convert the ATP-contained energy into a lever motion, pulling 2 nucleotides of DNA out of the RuvA tetramer per ATP hydrolyzed, thus driving DNA branch migration. The RuvB motors rotate together with the DNA substrate, which together with the progressing nucleotide cycle form the mechanistic basis for DNA recombination by continuous HJ branch migration. Branch migration allows RuvC to scan DNA until it finds its consensus sequence, where it cleaves and resolves cruciform DNA. This is Holliday junction branch migration complex subunit RuvB from Pseudomonas putida (strain W619).